The primary structure comprises 537 residues: Copine-3 (537 aa).

2 C2 domains span residues 1 to 115 and 124 to 247; these read MAAQ…TRPL and GKGS…PVEF. Phosphoserine is present on serine 14. Positions 22, 28, 81, 83, 93, 154, and 160 each coordinate Ca(2+). Position 197 is a phosphoserine (serine 197). 3 residues coordinate Ca(2+): aspartate 216, aspartate 218, and aspartate 224. The residue at position 243 (serine 243) is a Phosphoserine. The VWFA domain maps to 291–513; the sequence is NFTVGVDFTG…AQCVLAEIPQ (223 aa).

This sequence belongs to the copine family. Monomer. Interacts with ERBB2 (preferentially with the tyrosine phosphorylated form); this interaction occurs at the cell membrane and is increased in a growth factor heregulin-dependent manner. Interacts with SHC1; this interaction may mediate the binding of CPNE3 with ERBB2. Interacts with RACK1. Ca(2+) serves as cofactor. In terms of processing, phosphorylated on serine and threonine residues. Expressed in breast and weakly in prostate and ovarian tissues. Expressed in neutrophils (at protein level). Widely expressed. Expressed in the brain. Expressed in neutrophil precursors from the bone marrow and peripheral blood. Expressed in primary breast tumors and ovarian endometrioid adenocarcinoma.

The protein resides in the nucleus. Its subcellular location is the cytoplasm. The protein localises to the cell membrane. It localises to the cell junction. It is found in the focal adhesion. Its function is as follows. Calcium-dependent phospholipid-binding protein that plays a role in ERBB2-mediated tumor cell migration in response to growth factor heregulin stimulation. The protein is Copine-3 of Homo sapiens (Human).